The chain runs to 111 residues: Holo-[acyl-carrier-protein] synthase (111 aa).

Residues Asp-8 and Glu-57 each contribute to the Mg(2+) site.

It belongs to the P-Pant transferase superfamily. AcpS family. It depends on Mg(2+) as a cofactor.

The protein localises to the cytoplasm. The enzyme catalyses apo-[ACP] + CoA = holo-[ACP] + adenosine 3',5'-bisphosphate + H(+). Its function is as follows. Transfers the 4'-phosphopantetheine moiety from coenzyme A to a Ser of acyl-carrier-protein. The protein is Holo-[acyl-carrier-protein] synthase of Mycoplasmoides gallisepticum (strain R(low / passage 15 / clone 2)) (Mycoplasma gallisepticum).